Reading from the N-terminus, the 79-residue chain is D-alanyl carrier protein (79 aa).

A Carrier domain is found at 1–76 (MEEQVLSLLE…RVMAYVKKRV (76 aa)). S34 is subject to O-(pantetheine 4'-phosphoryl)serine.

The protein belongs to the DltC family. In terms of processing, 4'-phosphopantetheine is transferred from CoA to a specific serine of apo-DCP.

The protein resides in the cytoplasm. The protein operates within cell wall biogenesis; lipoteichoic acid biosynthesis. Functionally, carrier protein involved in the D-alanylation of lipoteichoic acid (LTA). The loading of thioester-linked D-alanine onto DltC is catalyzed by D-alanine--D-alanyl carrier protein ligase DltA. The DltC-carried D-alanyl group is further transferred to cell membrane phosphatidylglycerol (PG) by forming an ester bond, probably catalyzed by DltD. D-alanylation of LTA plays an important role in modulating the properties of the cell wall in Gram-positive bacteria, influencing the net charge of the cell wall. This is D-alanyl carrier protein from Abiotrophia defectiva (Streptococcus defectivus).